Consider the following 348-residue polypeptide: Nitrogenase vanadium-iron protein beta chain (348 aa).

Positions 31, 56, 115, and 153 each coordinate [8Fe-7S] cluster.

This sequence belongs to the NifD/NifK/NifE/NifN family. In terms of assembly, hexamer of two alpha, two beta, and two delta chains. It depends on [8Fe-7S] cluster as a cofactor.

It carries out the reaction N2 + 8 reduced [2Fe-2S]-[ferredoxin] + 16 ATP + 16 H2O = H2 + 8 oxidized [2Fe-2S]-[ferredoxin] + 2 NH4(+) + 16 ADP + 16 phosphate + 6 H(+). Its function is as follows. This vanadium-iron protein is part of the nitrogenase complex that catalyzes the key enzymatic reactions in nitrogen fixation. This chain is Nitrogenase vanadium-iron protein beta chain (vnfK), found in Azotobacter salinestris.